The following is a 300-amino-acid chain: GTP cyclohydrolase FolE2 (300 aa).

The protein belongs to the GTP cyclohydrolase IV family.

It catalyses the reaction GTP + H2O = 7,8-dihydroneopterin 3'-triphosphate + formate + H(+). The protein operates within cofactor biosynthesis; 7,8-dihydroneopterin triphosphate biosynthesis; 7,8-dihydroneopterin triphosphate from GTP: step 1/1. Converts GTP to 7,8-dihydroneopterin triphosphate. In Bacillus licheniformis (strain ATCC 14580 / DSM 13 / JCM 2505 / CCUG 7422 / NBRC 12200 / NCIMB 9375 / NCTC 10341 / NRRL NRS-1264 / Gibson 46), this protein is GTP cyclohydrolase FolE2.